A 157-amino-acid polypeptide reads, in one-letter code: Nascent polypeptide-associated complex subunit beta (157 aa).

The tract at residues 1–28 is disordered; it reads MPVDPEKLAKLQKSSAKKVGGSRVKAKK. Positions 33–98 constitute an NAC-A/B domain; sequence EQDDTKLIEA…PQEKNITQLI (66 aa). The disordered stretch occupies residues 124-157; sequence KTPKDFNTGSANAAADAGGEDIPDLVDQKFDDVE.

This sequence belongs to the NAC-beta family. Part of the nascent polypeptide-associated complex (NAC), consisting of EGD2 and EGD1. NAC associates with ribosomes via EGD1.

It localises to the cytoplasm. It is found in the nucleus. Functionally, component of the nascent polypeptide-associated complex (NAC), a dynamic component of the ribosomal exit tunnel, protecting the emerging polypeptides from interaction with other cytoplasmic proteins to ensure appropriate nascent protein targeting. The NAC complex also promotes mitochondrial protein import by enhancing productive ribosome interactions with the outer mitochondrial membrane and blocks the inappropriate interaction of ribosomes translating non-secretory nascent polypeptides with translocation sites in the membrane of the endoplasmic reticulum. EGD1 may act as a transcription factor that exert a negative effect on the expression of several genes that are transcribed by RNA polymerase II. In Candida albicans (strain SC5314 / ATCC MYA-2876) (Yeast), this protein is Nascent polypeptide-associated complex subunit beta (EGD1).